Reading from the N-terminus, the 25-residue chain is MRDKWRKKRVRRLKRKRRKVRARSK.

Residues 1–25 (MRDKWRKKRVRRLKRKRRKVRARSK) form a disordered region.

This sequence belongs to the eukaryotic ribosomal protein eS32 family. In terms of assembly, component of the small ribosomal subunit. Mature ribosomes consist of a small (40S) and a large (60S) subunit. The 40S subunit contains about 32 different proteins and 1 molecule of RNA (18S). The 60S subunit contains 45 different proteins and 3 molecules of RNA (25S, 5.8S and 5S).

It localises to the cytoplasm. Its function is as follows. Component of the ribosome, a large ribonucleoprotein complex responsible for the synthesis of proteins in the cell. The small ribosomal subunit (SSU) binds messenger RNAs (mRNAs) and translates the encoded message by selecting cognate aminoacyl-transfer RNA (tRNA) molecules. The large subunit (LSU) contains the ribosomal catalytic site termed the peptidyl transferase center (PTC), which catalyzes the formation of peptide bonds, thereby polymerizing the amino acids delivered by tRNAs into a polypeptide chain. The nascent polypeptides leave the ribosome through a tunnel in the LSU and interact with protein factors that function in enzymatic processing, targeting, and the membrane insertion of nascent chains at the exit of the ribosomal tunnel. This is Small ribosomal subunit protein eS32 from Candida albicans (strain SC5314 / ATCC MYA-2876) (Yeast).